The primary structure comprises 255 residues: Small ribosomal subunit protein uS2 (255 aa).

The tract at residues Asp233–Lys255 is disordered.

The protein belongs to the universal ribosomal protein uS2 family.

This is Small ribosomal subunit protein uS2 from Lactococcus lactis subsp. cremoris (strain SK11).